The sequence spans 1295 residues: MMEILRGSPALSAFRINKLLARFQAARLPVHNIYAEYVHFADLNAPLNDDEHAQLERLLKYGPALASHAPQGKLLLVTPRPGTISPWSSKATDIAHNCGLQQVNRLERGVAYYIEAGTLTNEQWQQVTAELHDRMMETVFFALDDAEQLFAHHQPTPVTSVDLLGQGRQALIDANLRLGLALAEDEIDYLQDAFTKLGRNPNDIELYMFAQANSEHCRHKIFNADWVIDGEQQPKSLFKMIKNTFETTPDHVLSAYKDNAAVMEGSEVGRYFADHETGRYDFHQEPAHILMKVETHNHPTAISPWPGAATGSGGEIRDEGATGRGAKPKAGLVGFSVSNLRIPGFEQPWEEDFGKPERIVTALDIMTEGPLGGAAFNNEFGRPALNGYFRTYEEKVNSHNGEELRGYHKPIMLAGGIGNIRADHVQKGEINVGAKLVVLGGPAMNIGLGGGAASSMASGQSDADLDFASVQRDNPEMERRCQEVIDRCWQLGDANPILFIHDVGAGGLSNAMPELVSDGGRGGKFELREILSDEPGMSPLEIWCNESQERYVLAVAADQLPLFDELCKRERAPYAVIGEATEELHLSLHDRHFDNQPIDLPLDVLLGKTPKMTRDVQTLKAKGDALAREGITIADAVKRVLHLPTVAEKTFLVTIGDRSVTGMVARDQMVGPWQVPVANCAVTTASLDSYYGEAMAIGERAPVALLDFAASARLAVGEALTNIAATQIGDIKRIKLSANWMAAAGHPGEDAGLYEAVKAVGEELCPALGLTIPVGKDSMSMKTRWQEGNEEREMTSPLSLVISAFARVEDVRHTITPQLSTEDNALLLIDLGKGNNALGATALAQVYRQLGDKPADVRDVAQLKGFYDAIQALVAQRKLLAYHDRSDGGLLVTLAEMAFAGHCGIDADIATLGDDRLAALFNEELGAVIQVRAADREAVESVLAQHGLADCVHYVGQAVSGDRFVITANGQTVFSESRTTLRVWWAETTWQMQRLRDNPECADQEHQAKSNDADPGLNVKLSFDINEDVAAPYIATGARPKVAVLREQGVNSHVEMAAAFHRAGFDAIDVHMSDLLTGRTGLEDFHALVACGGFSYGDVLGAGEGWAKSILFNDRVRDEFATFFHRPQTLALGVCNGCQMMSNLRELIPGSELWPRFVRNTSDRFEARFSLVEVTQSPSLLLQGMVGSQMPIAVSHGEGRVEVRDAAHLAALESKGLVALRYVDNFGKVTETYPANPNGSPNGITAVTTESGRVTIMMPHPERVFRTVSNSWHPENWGEDGPWMRIFRNARKQLG.

The disordered stretch occupies residues 305-327 (WPGAATGSGGEIRDEGATGRGAK). ATP-binding positions include 307-318 (GAATGSGGEIRD) and A678. Residues E718, N722, and D884 each contribute to the Mg(2+) site. Position 886 (S886) interacts with ATP. In terms of domain architecture, Glutamine amidotransferase type-1 spans 1042–1295 (VAVLREQGVN…IFRNARKQLG (254 aa)). C1135 (nucleophile) is an active-site residue. Catalysis depends on residues H1260 and E1262.

The protein in the N-terminal section; belongs to the FGAMS family. In terms of assembly, monomer. Both N-terminus methionine truncation and retention have been observed for this protein.

It localises to the cytoplasm. It carries out the reaction N(2)-formyl-N(1)-(5-phospho-beta-D-ribosyl)glycinamide + L-glutamine + ATP + H2O = 2-formamido-N(1)-(5-O-phospho-beta-D-ribosyl)acetamidine + L-glutamate + ADP + phosphate + H(+). It participates in purine metabolism; IMP biosynthesis via de novo pathway; 5-amino-1-(5-phospho-D-ribosyl)imidazole from N(2)-formyl-N(1)-(5-phospho-D-ribosyl)glycinamide: step 1/2. Its function is as follows. Phosphoribosylformylglycinamidine synthase involved in the purines biosynthetic pathway. Catalyzes the ATP-dependent conversion of formylglycinamide ribonucleotide (FGAR) and glutamine to yield formylglycinamidine ribonucleotide (FGAM) and glutamate. The polypeptide is Phosphoribosylformylglycinamidine synthase (Escherichia coli (strain K12)).